The primary structure comprises 200 residues: Probable molybdenum cofactor guanylyltransferase (200 aa).

GTP is bound by residues 8-10, K20, D66, and D97; that span reads LAG. A Mg(2+)-binding site is contributed by D97.

The protein belongs to the MobA family. Requires Mg(2+) as cofactor.

It is found in the cytoplasm. It catalyses the reaction Mo-molybdopterin + GTP + H(+) = Mo-molybdopterin guanine dinucleotide + diphosphate. In terms of biological role, transfers a GMP moiety from GTP to Mo-molybdopterin (Mo-MPT) cofactor (Moco or molybdenum cofactor) to form Mo-molybdopterin guanine dinucleotide (Mo-MGD) cofactor. The polypeptide is Probable molybdenum cofactor guanylyltransferase (Bacillus velezensis (strain DSM 23117 / BGSC 10A6 / LMG 26770 / FZB42) (Bacillus amyloliquefaciens subsp. plantarum)).